Consider the following 602-residue polypeptide: DNA damage-binding protein CMR1 (602 aa).

Positions 35–85 are disordered; the sequence is KEVDNKSFSSPSSQKRRKTTKKPVIKKEISEPSRRSRRIAGIKSELEDPKQ. Basic residues predominate over residues 48 to 58; it reads QKRRKTTKKPV. Residues 59-68 are compositionally biased toward basic and acidic residues; the sequence is IKKEISEPSR. 6 WD repeats span residues 229-270, 291-328, 390-430, 446-484, 526-569, and 571-602; these read ICHN…NDTK, RNVS…STEL, LHDK…KSVY, NSRL…KLDN, GRWV…LAHL, and EQVG…YLFE.

It belongs to the WD repeat DDB2/WDR76 family.

Its function is as follows. DNA-binding protein that binds to both single- and double-stranded DNA. Binds preferentially to UV-damaged DNA. May be involved in DNA-metabolic processes. This Candida albicans (strain SC5314 / ATCC MYA-2876) (Yeast) protein is DNA damage-binding protein CMR1.